The sequence spans 116 residues: Nucleoid-associated protein P9301_00191 (116 aa).

It belongs to the YbaB/EbfC family. In terms of assembly, homodimer.

It localises to the cytoplasm. The protein resides in the nucleoid. In terms of biological role, binds to DNA and alters its conformation. May be involved in regulation of gene expression, nucleoid organization and DNA protection. This chain is Nucleoid-associated protein P9301_00191, found in Prochlorococcus marinus (strain MIT 9301).